Here is a 287-residue protein sequence, read N- to C-terminus: Mitochondrial dicarboxylate carrier (287 aa).

3 Solcar repeats span residues 8 to 88 (SRWY…VRDR), 101 to 188 (EKVL…AKQL), and 197 to 280 (DNIF…LRKN). Transmembrane regions (helical) follow at residues 10-30 (WYFG…LDLL), 63-82 (GLSA…FAIY), 103-123 (VLLG…ADLV), 163-182 (GATM…LSCY), 203-223 (FVAS…LDVL), and 255-275 (GLVP…VFLE).

Belongs to the mitochondrial carrier (TC 2.A.29) family. Present in high amounts in liver and kidney, and at lower levels in all the other tissues analyzed.

It is found in the mitochondrion inner membrane. The enzyme catalyses (S)-malate(in) + phosphate(out) = (S)-malate(out) + phosphate(in). It catalyses the reaction malonate(out) + (S)-malate(in) = malonate(in) + (S)-malate(out). The catalysed reaction is (S)-malate(in) + succinate(out) = (S)-malate(out) + succinate(in). It carries out the reaction (S)-malate(in) + sulfate(out) = (S)-malate(out) + sulfate(in). The enzyme catalyses malonate(out) + phosphate(in) = malonate(in) + phosphate(out). It catalyses the reaction succinate(out) + phosphate(in) = succinate(in) + phosphate(out). The catalysed reaction is sulfate(out) + phosphate(in) = sulfate(in) + phosphate(out). It carries out the reaction malonate(out) + succinate(in) = malonate(in) + succinate(out). Functionally, catalyzes the electroneutral exchange or flux of physiologically important metabolites such as dicarboxylates (malonate, malate, succinate), inorganic sulfur-containing anions, and phosphate, across mitochondrial inner membrane. Plays an important role in gluconeogenesis, fatty acid metabolism, urea synthesis, and sulfur metabolism, particularly in liver, by supplying the substrates for the different metabolic processes. Regulates fatty acid release from adipocytes, and contributes to systemic insulin sensitivity. In Homo sapiens (Human), this protein is Mitochondrial dicarboxylate carrier (SLC25A10).